We begin with the raw amino-acid sequence, 1093 residues long: Non-canonical non-ribosomal peptide synthetase ascB (1093 aa).

A compositionally biased stretch (low complexity) spans 1-26 (MTVNGHHTNGVNGANGTNGHANGSNG). Residues 1–27 (MTVNGHHTNGVNGANGTNGHANGSNGI) are disordered. The interval 35–392 (EIVPFVKPQV…LSLTFAPTDN (358 aa)) is adenylation (A) domain. The Carrier domain maps to 591–678 (DNLEQNLKSL…EIAAALTKGS (88 aa)). Ser-627 carries the post-translational modification O-(pantetheine 4'-phosphoryl)serine. The thioester reductase (TR) domain stretch occupies residues 721–971 (LTGATGSLGS…IPVDDAASTV (251 aa)).

The protein belongs to the NRP synthetase family.

It carries out the reaction ilicicolinate B + AH2 + ATP = ilicicolin B + A + AMP + diphosphate. The protein operates within secondary metabolite biosynthesis; terpenoid biosynthesis. Non-canonical non-ribosomal peptide synthetase; part of the asc-1 gene cluster that mediates the biosynthesis of both ascochlorin and ascofuranone, a strong inhibitor of cyanide-insensitive alternative oxidases and a promising drug candidate against African trypanosomiasis. The first step in the pathway is performed by the non-reducing polyketide synthase ascC that produces orsellinic acid by condensing acetyl-CoA with 3 malonyl-CoA units. Orsellinic acid is then prenylated by the prenyltransferase ascA to yield ilicicolinic acid B. Ilicicolinic acid B is further reduced to ilicicolin B by the reductase ascB. The halogenase ascD then chlorinates ilicicolin B to produce ilicicolin A which is converted to ilicicolin A epoxide by the cytochrome P450 monooxygenase ascE that catalyzes stereoselective epoxidation of the terminal double bond of the prenyl group. Ilicicolin A epoxide is the last common precursor for the biosynthesis of ascofuranone and ascochlorin. The terpene cyclase ascF produces a monocyclic terpene, and the cyclization reaction is proposed to be initiated by protonation of the terminal epoxide of ilicicolin A epoxide to generate a monocyclic tertiarycation, which is followed by a series of hydride and methyl shifts with abstraction of proton, leading to the formation of the (14S,15R,19R)-trimethylcyclohexanone ring structure of ilicicolin C, which is finally reduced to ascochlorin by the dehydrogenase ascG. On the other hand, ilicicolin A epoxide is hydroxylated by the cytochrome P450 monooxygenase ascH, and the resultant product is cyclized by the terpene cyclase ascI to ascofuranol via protonation-initiated epoxide ring opening, which facilitates the 6-endo-tet cyclization to form the tetrahy-drofuran ring. Finally, ascofuranol is oxidized into ascofuranone by ascJ. This is Non-canonical non-ribosomal peptide synthetase ascB from Acremonium egyptiacum (Oospora egyptiaca).